Here is a 368-residue protein sequence, read N- to C-terminus: NAD(P)H-quinone oxidoreductase subunit 1, chloroplastic (368 aa).

The next 9 membrane-spanning stretches (helical) occupy residues 11-31 (RVIN…LIWI), 33-53 (IYIL…VWLE), 98-118 (WLFS…YLVI), 131-151 (IGVF…LMAG), 177-197 (LALC…VDIV), 205-225 (FWGW…ISSL), 255-275 (FGLF…FVTI), 305-325 (VLGI…FLFI), and 348-368 (FLLP…LLLL).

This sequence belongs to the complex I subunit 1 family. As to quaternary structure, NDH is composed of at least 16 different subunits, 5 of which are encoded in the nucleus.

It localises to the plastid. Its subcellular location is the chloroplast thylakoid membrane. The catalysed reaction is a plastoquinone + NADH + (n+1) H(+)(in) = a plastoquinol + NAD(+) + n H(+)(out). The enzyme catalyses a plastoquinone + NADPH + (n+1) H(+)(in) = a plastoquinol + NADP(+) + n H(+)(out). Functionally, NDH shuttles electrons from NAD(P)H:plastoquinone, via FMN and iron-sulfur (Fe-S) centers, to quinones in the photosynthetic chain and possibly in a chloroplast respiratory chain. The immediate electron acceptor for the enzyme in this species is believed to be plastoquinone. Couples the redox reaction to proton translocation, and thus conserves the redox energy in a proton gradient. The protein is NAD(P)H-quinone oxidoreductase subunit 1, chloroplastic of Cycas taitungensis (Prince sago).